The primary structure comprises 79 residues: Succinate dehydrogenase assembly factor 1, mitochondrial (79 aa).

The protein belongs to the complex I LYR family. SDHAF1 subfamily. As to quaternary structure, interacts with SDH2 within an SDH1-SDH2 subcomplex.

It localises to the mitochondrion matrix. Functionally, plays an essential role in the assembly of succinate dehydrogenase (SDH), an enzyme complex (also referred to as respiratory complex II) that is a component of both the tricarboxylic acid (TCA) cycle and the mitochondrial electron transport chain, and which couples the oxidation of succinate to fumarate with the reduction of ubiquinone (coenzyme Q) to ubiquinol. Promotes maturation of the iron-sulfur protein subunit SDH2 of the SDH catalytic dimer, protecting it from the deleterious effects of oxidants. Acts together with SDHAF3 (SDH7). In Saccharomyces cerevisiae (strain YJM789) (Baker's yeast), this protein is Succinate dehydrogenase assembly factor 1, mitochondrial.